We begin with the raw amino-acid sequence, 198 residues long: Recombination protein RecR (198 aa).

A C4-type zinc finger spans residues 57–72; it reads CSVCGRLTDDDPCSIC. Residues 80–175 enclose the Toprim domain; that stretch reads TTILVLEDSR…KVTRLARGLA (96 aa).

Belongs to the RecR family.

Its function is as follows. May play a role in DNA repair. It seems to be involved in an RecBC-independent recombinational process of DNA repair. It may act with RecF and RecO. The sequence is that of Recombination protein RecR from Streptococcus pneumoniae (strain Hungary19A-6).